We begin with the raw amino-acid sequence, 496 residues long: Cytochrome P450 71D95 (496 aa).

The chain crosses the membrane as a helical; Signal-anchor span at residues 2-22; that stretch reads ELQISSAIIILVATFVASLLI. Cys-436 contributes to the heme binding site.

Belongs to the cytochrome P450 family. The cofactor is heme.

The protein resides in the endoplasmic reticulum membrane. It carries out the reaction (4S)-limonene + reduced [NADPH--hemoprotein reductase] + O2 = (1S,6R)-isopiperitenol + oxidized [NADPH--hemoprotein reductase] + H2O + H(+). Its function is as follows. Hydroxylates both (+)- and (-)-limonene to (+) and (-)-trans-isopiperitenol. The chain is Cytochrome P450 71D95 (CYP71D95) from Mentha spicata (Spearmint).